A 182-amino-acid polypeptide reads, in one-letter code: Transcription termination/antitermination protein NusG (182 aa).

One can recognise a KOW domain in the interval 131 to 163 (VGEQVRIKSGPFANQVGEVQEIETDKFKLTVLV).

This sequence belongs to the NusG family.

Its function is as follows. Participates in transcription elongation, termination and antitermination. This is Transcription termination/antitermination protein NusG from Staphylococcus aureus (strain NCTC 8325 / PS 47).